Here is a 294-residue protein sequence, read N- to C-terminus: Small ribosomal subunit biogenesis GTPase RsgA 2, mitochondrial (294 aa).

The transit peptide at 1–68 (MQTFSSAAAL…RSFLAPVLPL (68 aa)) directs the protein to the mitochondrion. A CP-type G domain is found at 155–294 (VSEVLDPPVA…VSFFLSYFIL (140 aa)). 255–263 (GPSGVGKSS) lines the GTP pocket.

This sequence belongs to the TRAFAC class YlqF/YawG GTPase family.

The protein resides in the mitochondrion. The chain is Small ribosomal subunit biogenesis GTPase RsgA 2, mitochondrial from Arabidopsis thaliana (Mouse-ear cress).